We begin with the raw amino-acid sequence, 139 residues long: Spermatogenesis-associated protein 33 (139 aa).

An interaction with ATG16L1 region spans residues 1–67 (MVTHAAGART…TAKHPPPAAS (67 aa)). Residues 1 to 83 (MVTHAAGART…VKQKSSRKKV (83 aa)) are disordered. The span at 25–50 (KSKEKLMEKHSQEARQADRESEKPVD) shows a compositional bias: basic and acidic residues. The interval 68 to 139 (LEEKPDVKQK…ADAYNSHLKE (72 aa)) is interaction with VDAC2. A PQIIIT motif is present at residues 86 to 91 (PQIIIT). At S94 the chain carries Phosphoserine. The span at 97–109 (TLVSCSSSGSDQQ) shows a compositional bias: polar residues. Positions 97–139 (TLVSCSSSGSDQQRTIREPEDWGPYRRHRNPSTADAYNSHLKE) are disordered. Residues 110–120 (RTIREPEDWGP) are compositionally biased toward basic and acidic residues.

As to quaternary structure, interacts (via PQIIIT motif) with PPP3R1, PPP3R2, PPP3CA, PPP3CB and PPP3CC. Interacts with VDAC2. Interacts with ATG16L1 (via WD repeats).

The protein localises to the cytoplasm. The protein resides in the cytosol. It localises to the nucleus. It is found in the mitochondrion. Its function is as follows. Plays an important role in sperm motility and male fertility. Required for sperm midpiece flexibility and for the localization of sperm calcineurin to the mitochondria. Promotes mitophagy as well as acts as an autophagy mediator in male germline cells. Links damaged mitochondria to autophagosomes via its binding to the outer mitochondrial membrane protein VDAC2, as well as to key autophagy machinery component ATG16L1. The chain is Spermatogenesis-associated protein 33 (SPATA33) from Homo sapiens (Human).